The following is a 359-amino-acid chain: Acyl-CoA desaturase 3 (359 aa).

Residues 1 to 34 (MPGHLLQEEMTPSYTTTTTITAPPSGSLQNGREK) are disordered. Topologically, residues 1-72 (MPGHLLQEEM…EGPPPKLEYV (72 aa)) are cytoplasmic. A compositionally biased stretch (low complexity) spans 11–27 (TPSYTTTTTITAPPSGS). Residues 73–93 (WRNIILMALLHVGALYGITLV) form a helical membrane-spanning segment. Residue asparagine 75 coordinates substrate. Residues 94–97 (PSCK) are Lumenal-facing. A helical membrane pass occupies residues 98–118 (LYTCLFAFVYYVISIEGIGAG). Over 119–217 (VHRLWSHRTY…EKLVMFQRRY (99 aa)) the chain is Cytoplasmic. Residues histidine 120 and histidine 125 each contribute to the Fe cation site. A Histidine box-1 motif is present at residues 120-125 (HRLWSH). Substrate-binding residues include asparagine 148, arginine 155, and aspartate 156. Histidine 157, histidine 160, and histidine 161 together coordinate Fe cation. The Histidine box-2 signature appears at 157 to 161 (HRAHH). Substrate is bound by residues arginine 188 and lysine 189. Serine 203 is modified (phosphoserine). A helical membrane pass occupies residues 218–237 (YKPGILLMCFILPTLVPWYC). Topologically, residues 238–241 (WGET) are lumenal. Residues 242-263 (FLNSFYVATLLRYAVVLNATWL) form a helical membrane-spanning segment. Tryptophan 262 contributes to the substrate binding site. Topologically, residues 264 to 359 (VNSAAHLYGY…RTGDGSHKSG (96 aa)) are cytoplasmic. Fe cation contacts are provided by histidine 269, histidine 298, histidine 301, and histidine 302. A Histidine box-3 motif is present at residues 298–302 (HNYHH).

The protein belongs to the fatty acid desaturase type 1 family. Fe(2+) serves as cofactor. In terms of tissue distribution, detected in skin, but at lower levels compared to Scd1. Detected in the middlle part of the sebaceous gland, but not in hair follicle. Not detected in liver and brain.

Its subcellular location is the endoplasmic reticulum membrane. It localises to the microsome membrane. The enzyme catalyses hexadecanoyl-CoA + 2 Fe(II)-[cytochrome b5] + O2 + 2 H(+) = (9Z)-hexadecenoyl-CoA + 2 Fe(III)-[cytochrome b5] + 2 H2O. Its function is as follows. Stearoyl-CoA desaturase that utilizes O(2) and electrons from reduced cytochrome b5 to introduce the first double bond into saturated fatty acyl-CoA substrates. Catalyzes the insertion of a cis double bond at the delta-9 position into fatty acyl-CoA substrates including palmitoyl-CoA. Has a strong preference for saturated fatty acids with chain lengths of 14 or 16 carbon atoms (C14:0 and C16:0), and has only very low activity with stearatate (C18:0). Required for the biosynthesis of membrane phospholipids, cholesterol esters and triglycerides. This is Acyl-CoA desaturase 3 from Mus musculus (Mouse).